Consider the following 261-residue polypeptide: Protein STAY-GREEN, chloroplastic (261 aa).

The transit peptide at 1 to 54 (MDTLTSAPLLTTKFKPSFSPQQKPCFPHRRRFENGKKNQSIVPVARLFGPAIFE) directs the protein to the chloroplast.

Belongs to the staygreen family.

The protein localises to the plastid. It localises to the chloroplast. In terms of biological role, probably involved in the disassembling mechanism of the intact light-harvesting complex of photosystem II (LHCII) in the thylakoid membranes. Required for the chlorophyll breakdown pathway. Acts independent and upstream of pheophorbide a oxygenase (PAO). This chain is Protein STAY-GREEN, chloroplastic (SGR), found in Pisum sativum (Garden pea).